The primary structure comprises 410 residues: Chloride intracellular channel protein 5 (410 aa).

The G-site signature appears at 191–194 (CPFS). The helical transmembrane segment at 193-213 (FSQRLFMILWLKGVVFNVTTV) threads the bilayer. The GST C-terminal domain maps to 260 to 400 (YPKLAAKHRE…AADSEIELAY (141 aa)).

This sequence belongs to the chloride channel CLIC family. Component of a multimeric complex consisting of several cytoskeletal proteins, including actin, ezrin, alpha-actinin, gelsolin, and IQGAP1. Interacts with AKAP9. Interacts with TPRN. TPRN, CLIC5 and PTPQR form concentric rings at the base of stereocilia and may form a complex. Interacts with EZR, MYO6 and RDX; the proteins may work together as a complex to stabilize linkages between the plasma membrane and subjacent actin cytoskeleton at the stereocilium base. In terms of tissue distribution, widely expressed in both fetal and adult human tissues. Isoform 1 is expressed in renal glomeruli endothelial cells and podocytes (at protein level).

The protein resides in the cytoplasm. Its subcellular location is the cytoskeleton. The protein localises to the cell cortex. It localises to the membrane. It is found in the apical cell membrane. The protein resides in the mitochondrion. Its subcellular location is the cell projection. The protein localises to the stereocilium. It localises to the golgi apparatus. It is found in the microtubule organizing center. The protein resides in the centrosome. The catalysed reaction is chloride(in) = chloride(out). The enzyme catalyses Na(+)(in) = Na(+)(out). It catalyses the reaction K(+)(in) = K(+)(out). Its activity is regulated as follows. Inhibited by F-actin. In terms of biological role, in the soluble state, catalyzes glutaredoxin-like thiol disulfide exchange reactions with reduced glutathione as electron donor. Can insert into membranes and form non-selective ion channels almost equally permeable to Na(+), K(+) and Cl(-). Required for normal hearing. It is necessary for the formation of stereocilia in the inner ear and normal development of the organ of Corti. May play a role in the regulation of transepithelial ion absorption and secretion. Is required for the development and/or maintenance of the proper glomerular endothelial cell and podocyte architecture. Plays a role in formation of the lens suture in the eye, which is important for normal optical properties of the lens. The polypeptide is Chloride intracellular channel protein 5 (Homo sapiens (Human)).